Reading from the N-terminus, the 782-residue chain is Probable cyclic di-GMP phosphodiesterase PdeI (782 aa).

2 helical membrane passes run 12–32 and 286–306; these read LIIL…IINY and LFYL…LMTT. In terms of domain architecture, EAL spans 527 to 781; the sequence is NIWIARNIRH…AWDKSGKLVK (255 aa).

The protein localises to the cell membrane. It catalyses the reaction 3',3'-c-di-GMP + H2O = 5'-phosphoguanylyl(3'-&gt;5')guanosine + H(+). In terms of biological role, phosphodiesterase (PDE) that catalyzes the hydrolysis of cyclic-di-GMP (c-di-GMP) to 5'-pGpG. Overexpression reduces biofilm formation. Cyclic-di-GMP is a second messenger which controls cell surface-associated traits in bacteria. The chain is Probable cyclic di-GMP phosphodiesterase PdeI from Escherichia coli (strain K12).